The following is a 183-amino-acid chain: Endoribonuclease YbeY (183 aa).

Zn(2+) is bound by residues His-142, His-146, and His-152.

It belongs to the endoribonuclease YbeY family. Zn(2+) is required as a cofactor.

The protein localises to the cytoplasm. Single strand-specific metallo-endoribonuclease involved in late-stage 70S ribosome quality control and in maturation of the 3' terminus of the 16S rRNA. The protein is Endoribonuclease YbeY of Trichodesmium erythraeum (strain IMS101).